The chain runs to 76 residues: MHGTHFLILLLLCGVLGSNGVTPDIKNVAKAERNMHNMLRCLKKNEPIVKSRILTLPPNCNQYVSAVVETWKPEGV.

A signal peptide spans 1–20 (MHGTHFLILLLLCGVLGSNG).

Post-translationally, cAMP-dependent phosphorylation. As to expression, lumen fluid of male accessory glands, becomes seminal fluid.

Its subcellular location is the secreted. Functionally, transferred from male to female during mating and may affect egglaying and behavior after mating. In Drosophila melanogaster (Fruit fly), this protein is Accessory gland-specific peptide 57Dc (Mst57Dc).